A 391-amino-acid chain; its full sequence is Saxitoxin and tetrodotoxin-binding protein 1 (391 aa).

Residues 1–20 (MGAVPGVVLLLMLAVLGIRA) form the signal peptide. 2 tandem repeats follow at residues 24 to 202 (PEEC…HKKS) and 203 to 391 (PEEC…PEQD). Residues asparagine 54, asparagine 63, asparagine 97, asparagine 234, asparagine 268, asparagine 277, and asparagine 307 are each glycosylated (N-linked (GlcNAc...) asparagine).

Homodimer or heterodimer of PSTBP1 and PSTBP2. In terms of processing, glycosylated.

The protein localises to the secreted. Its function is as follows. Binds both saxitoxin and tetradotoxin. May play a role in toxin accumulation and/or excretion. This is Saxitoxin and tetrodotoxin-binding protein 1 (psbp1) from Takifugu pardalis (Panther puffer).